The primary structure comprises 254 residues: Aspartate/glutamate leucyltransferase (254 aa).

It belongs to the R-transferase family. Bpt subfamily.

Its subcellular location is the cytoplasm. The catalysed reaction is N-terminal L-glutamyl-[protein] + L-leucyl-tRNA(Leu) = N-terminal L-leucyl-L-glutamyl-[protein] + tRNA(Leu) + H(+). It catalyses the reaction N-terminal L-aspartyl-[protein] + L-leucyl-tRNA(Leu) = N-terminal L-leucyl-L-aspartyl-[protein] + tRNA(Leu) + H(+). Functionally, functions in the N-end rule pathway of protein degradation where it conjugates Leu from its aminoacyl-tRNA to the N-termini of proteins containing an N-terminal aspartate or glutamate. The chain is Aspartate/glutamate leucyltransferase from Maricaulis maris (strain MCS10) (Caulobacter maris).